The primary structure comprises 313 residues: Ribosomal RNA small subunit methyltransferase H (313 aa).

S-adenosyl-L-methionine contacts are provided by residues glycine 35–histidine 37, aspartate 55, phenylalanine 79, aspartate 101, and glutamine 108.

It belongs to the methyltransferase superfamily. RsmH family.

It is found in the cytoplasm. The catalysed reaction is cytidine(1402) in 16S rRNA + S-adenosyl-L-methionine = N(4)-methylcytidine(1402) in 16S rRNA + S-adenosyl-L-homocysteine + H(+). Specifically methylates the N4 position of cytidine in position 1402 (C1402) of 16S rRNA. The chain is Ribosomal RNA small subunit methyltransferase H from Escherichia coli O6:H1 (strain CFT073 / ATCC 700928 / UPEC).